The following is a 317-amino-acid chain: Glutaminase (317 aa).

Residues serine 67, asparagine 118, glutamate 162, asparagine 169, tyrosine 193, tyrosine 245, and valine 263 each contribute to the substrate site.

It belongs to the glutaminase family. Homotetramer.

The enzyme catalyses L-glutamine + H2O = L-glutamate + NH4(+). The protein is Glutaminase of Brucella abortus (strain S19).